The primary structure comprises 274 residues: Glutamate racemase (274 aa).

Substrate is bound by residues 9–10 (DS) and 41–42 (YG). The active-site Proton donor/acceptor is Cys72. 73-74 (NT) serves as a coordination point for substrate. The Proton donor/acceptor role is filled by Cys184. 185-186 (TH) serves as a coordination point for substrate.

Belongs to the aspartate/glutamate racemases family.

The catalysed reaction is L-glutamate = D-glutamate. It functions in the pathway cell wall biogenesis; peptidoglycan biosynthesis. Functionally, provides the (R)-glutamate required for cell wall biosynthesis. In Oceanobacillus iheyensis (strain DSM 14371 / CIP 107618 / JCM 11309 / KCTC 3954 / HTE831), this protein is Glutamate racemase.